The sequence spans 167 residues: Epithelial membrane protein 2 (167 aa).

The chain crosses the membrane as a helical span at residues 1–21 (MLVLLAFIIVFHITSAALLLV). 3 N-linked (GlcNAc...) asparagine glycosylation sites follow: asparagine 44, asparagine 47, and asparagine 52. 3 helical membrane passes run 67–87 (TMIL…LQLF), 95–115 (FVLT…AASI), and 143–163 (FILA…YLIL).

The protein belongs to the PMP-22/EMP/MP20 family. Interacts with PTK2; regulates PTK2 activation and localization. Interacts with ITGB3; regulates the levels of the heterodimer ITGA5-ITGB3 integrin surface expression. Interacts with P2RX7 (via C-terminus). Interacts with ITGB1; the interaction may be direct or indirect and ITGB1 has a heterodimer form.

It is found in the golgi apparatus membrane. The protein resides in the cell membrane. The protein localises to the apical cell membrane. It localises to the membrane raft. Its subcellular location is the cytoplasm. It is found in the nucleus. The protein resides in the perinuclear region. Functionally, functions as a key regulator of cell membrane composition by regulating protein surface expression. Also, plays a role in regulation of processes including cell migration, cell proliferation, cell contraction and cell adhesion. Regulates transepithelial migration of neutrophils into the alveolar lumen, potentially via mediation of cell surface expression of adhesion markers and lipid raft formation. Negatively regulates caveolae formation by reducing CAV1 expression and CAV1 amount by increasing lysosomal degradation. Facilitates surface trafficking and the formation of lipid rafts bearing GPI-anchor proteins. Regulates surface expression of MHC1 and ICAM1 proteins increasing susceptibility to T-cell mediated cytotoxicity. Regulates the plasma membrane expression of the integrin heterodimers ITGA6-ITGB1, ITGA5-ITGB3 and ITGA5-ITGB1 resulting in modulation of cell-matrix adhesion. Also regulates many processes through PTK2. Regulates blood vessel endothelial cell migration and angiogenesis by regulating VEGF protein expression through PTK2 activation. Regulates cell migration and cell contraction through PTK2 and SRC activation. Regulates focal adhesion density, F-actin conformation and cell adhesion capacity through interaction with PTK2. Positively regulates cell proliferation. Plays a role during cell death and cell blebbing. Promotes angiogenesis and vasculogenesis through induction of VEGFA via a HIF1A-dependent pathway. Also plays a role in embryo implantation by regulating surface trafficking of integrin heterodimer ITGA5-ITGB3. Plays a role in placental angiogenesis and uterine natural killer cell regulation at the maternal-fetal placental interface, however not required in the maternal tissues for a viable pregnancy. Involved in the early stages of embryogenic development and cardiogenesis, potentially via regulation of epithelial-mesenchymal transition timing. May play a role in glomerular filtration. The chain is Epithelial membrane protein 2 (EMP2) from Bos taurus (Bovine).